The chain runs to 143 residues: Large ribosomal subunit protein uL13 (143 aa).

This sequence belongs to the universal ribosomal protein uL13 family. As to quaternary structure, part of the 50S ribosomal subunit.

In terms of biological role, this protein is one of the early assembly proteins of the 50S ribosomal subunit, although it is not seen to bind rRNA by itself. It is important during the early stages of 50S assembly. This is Large ribosomal subunit protein uL13 from Desulfitobacterium hafniense (strain Y51).